We begin with the raw amino-acid sequence, 223 residues long: Lipoprotein-releasing system ATP-binding protein LolD (223 aa).

The 222-residue stretch at 2-223 (IQVRNLKKTF…LRDGEIVTCA (222 aa)) folds into the ABC transporter domain. 38–45 (GVSGAGKT) is an ATP binding site.

It belongs to the ABC transporter superfamily. Lipoprotein translocase (TC 3.A.1.125) family. In terms of assembly, the complex is composed of two ATP-binding proteins (LolD) and two transmembrane proteins (LolC and LolE).

The protein resides in the cell inner membrane. Functionally, part of the ABC transporter complex LolCDE involved in the translocation of mature outer membrane-directed lipoproteins, from the inner membrane to the periplasmic chaperone, LolA. Responsible for the formation of the LolA-lipoprotein complex in an ATP-dependent manner. This Syntrophus aciditrophicus (strain SB) protein is Lipoprotein-releasing system ATP-binding protein LolD.